Reading from the N-terminus, the 258-residue chain is Trifolitoxin-processing protein TfxF (258 aa).

In terms of biological role, the actions of the proteins TfxB, TfxD and TfxF are implicated in the processing of the inactive trifolitoxin (TfxA) precursor into the active peptide. This Rhizobium leguminosarum bv. trifolii protein is Trifolitoxin-processing protein TfxF (tfxF).